The chain runs to 69 residues: NAD(P)H-quinone oxidoreductase subunit L (69 aa).

Transmembrane regions (helical) follow at residues 5–25 and 40–60; these read LILL…ITYF and GFMY…SPFL.

The protein belongs to the complex I NdhL subunit family. In terms of assembly, NDH-1 can be composed of about 15 different subunits; different subcomplexes with different compositions have been identified which probably have different functions.

The protein resides in the cellular thylakoid membrane. It carries out the reaction a plastoquinone + NADH + (n+1) H(+)(in) = a plastoquinol + NAD(+) + n H(+)(out). The enzyme catalyses a plastoquinone + NADPH + (n+1) H(+)(in) = a plastoquinol + NADP(+) + n H(+)(out). Functionally, NDH-1 shuttles electrons from an unknown electron donor, via FMN and iron-sulfur (Fe-S) centers, to quinones in the respiratory and/or the photosynthetic chain. The immediate electron acceptor for the enzyme in this species is believed to be plastoquinone. Couples the redox reaction to proton translocation, and thus conserves the redox energy in a proton gradient. Cyanobacterial NDH-1 also plays a role in inorganic carbon-concentration. The protein is NAD(P)H-quinone oxidoreductase subunit L of Acaryochloris marina (strain MBIC 11017).